The chain runs to 868 residues: DNA topoisomerase 1 (868 aa).

One can recognise a Toprim domain in the interval 3–148 (KSLVIVESPA…RFSRVVFNEI (146 aa)). Residues glutamate 9 and aspartate 117 each contribute to the Mg(2+) site. The region spanning 164 to 581 (NLDRVNAQQT…QFFKDFSQQL (418 aa)) is the Topo IA-type catalytic domain. The interval 198 to 203 (SAGRVQ) is interaction with DNA. Residue tyrosine 325 is the O-(5'-phospho-DNA)-tyrosine intermediate of the active site. C4-type zinc fingers lie at residues 605-636 (CPTCGRKMAIRTASTGVFLGCSGYALPPKERC), 667-694 (CPKCGTAMDSYLIDPERKIHICGHNPNC), and 716-739 (CDKCGADMHLKLGRFGKYMGCTSC).

This sequence belongs to the type IA topoisomerase family. In terms of assembly, monomer. It depends on Mg(2+) as a cofactor.

The catalysed reaction is ATP-independent breakage of single-stranded DNA, followed by passage and rejoining.. Its function is as follows. Releases the supercoiling and torsional tension of DNA, which is introduced during the DNA replication and transcription, by transiently cleaving and rejoining one strand of the DNA duplex. Introduces a single-strand break via transesterification at a target site in duplex DNA. The scissile phosphodiester is attacked by the catalytic tyrosine of the enzyme, resulting in the formation of a DNA-(5'-phosphotyrosyl)-enzyme intermediate and the expulsion of a 3'-OH DNA strand. The free DNA strand then undergoes passage around the unbroken strand, thus removing DNA supercoils. Finally, in the religation step, the DNA 3'-OH attacks the covalent intermediate to expel the active-site tyrosine and restore the DNA phosphodiester backbone. This is DNA topoisomerase 1 from Pasteurella multocida (strain Pm70).